The sequence spans 129 residues: MSNVPNELKYSKEHEWLRKEADGTYTVGITEHAQELLGDMVFVDLPDVGTTVNAGDDCAVAESVKAASDIYAPVSGEIVAVNDALSDSPELVNSEPYGQGWIFKIKASDEAEVAALLDASAYEALLEDE.

The Lipoyl-binding domain occupies 24–106; sequence TYTVGITEHA…YGQGWIFKIK (83 aa). An N6-lipoyllysine modification is found at Lys65.

The protein belongs to the GcvH family. As to quaternary structure, the glycine cleavage system is composed of four proteins: P, T, L and H. The cofactor is (R)-lipoate.

The glycine cleavage system catalyzes the degradation of glycine. The H protein shuttles the methylamine group of glycine from the P protein to the T protein. The sequence is that of Glycine cleavage system H protein from Cronobacter sakazakii (strain ATCC BAA-894) (Enterobacter sakazakii).